A 326-amino-acid polypeptide reads, in one-letter code: tRNA-modifying protein YgfZ (326 aa).

Folate is bound by residues Trp-27 and Trp-189.

This sequence belongs to the tRNA-modifying YgfZ family.

The protein localises to the cytoplasm. In terms of biological role, folate-binding protein involved in regulating the level of ATP-DnaA and in the modification of some tRNAs. It is probably a key factor in regulatory networks that act via tRNA modification, such as initiation of chromosomal replication. This Salmonella schwarzengrund (strain CVM19633) protein is tRNA-modifying protein YgfZ.